Consider the following 190-residue polypeptide: Imidazoleglycerol-phosphate dehydratase (190 aa).

This sequence belongs to the imidazoleglycerol-phosphate dehydratase family.

It is found in the cytoplasm. It catalyses the reaction D-erythro-1-(imidazol-4-yl)glycerol 3-phosphate = 3-(imidazol-4-yl)-2-oxopropyl phosphate + H2O. Its pathway is amino-acid biosynthesis; L-histidine biosynthesis; L-histidine from 5-phospho-alpha-D-ribose 1-diphosphate: step 6/9. This chain is Imidazoleglycerol-phosphate dehydratase, found in Methanococcus maripaludis (strain DSM 14266 / JCM 13030 / NBRC 101832 / S2 / LL).